The primary structure comprises 490 residues: Betaine aldehyde dehydrogenase (490 aa).

D93 lines the K(+) pocket. Position 150 to 152 (150 to 152) interacts with NAD(+); that stretch reads GAW. K162 functions as the Charge relay system in the catalytic mechanism. NAD(+) is bound at residue 176 to 179; that stretch reads KPSE. V180 lines the K(+) pocket. 230–233 is a binding site for NAD(+); the sequence is GIAS. Position 246 (L246) interacts with K(+). Catalysis depends on E252, which acts as the Proton acceptor. G254, C286, and E387 together coordinate NAD(+). The active-site Nucleophile is C286. Cysteine sulfenic acid (-SOH) is present on C286. K(+) is bound by residues K457 and G460. Residue E464 is the Charge relay system of the active site.

It belongs to the aldehyde dehydrogenase family. In terms of assembly, dimer of dimers. The cofactor is K(+).

It carries out the reaction betaine aldehyde + NAD(+) + H2O = glycine betaine + NADH + 2 H(+). Its pathway is amine and polyamine biosynthesis; betaine biosynthesis via choline pathway; betaine from betaine aldehyde: step 1/1. In terms of biological role, involved in the biosynthesis of the osmoprotectant glycine betaine. Catalyzes the irreversible oxidation of betaine aldehyde to the corresponding acid. This chain is Betaine aldehyde dehydrogenase, found in Yersinia pestis.